The sequence spans 85 residues: Contulakin-Lt2 (85 aa).

Residues 1–22 (MQMAYWVMVMMMVGITAPLSEG) form the signal peptide. A propeptide spanning residues 23 to 61 (RKLNDAIRGLVPNDLTPQLLQSLVSRRHRVFHLDNTYLK) is cleaved from the precursor. Cys-65 and Cys-70 form a disulfide bridge. A propeptide spanning residues 76-85 (RRRDLKKRNK) is cleaved from the precursor.

Belongs to the conotoxin C superfamily. As to expression, expressed by the venom duct.

The protein resides in the secreted. Its function is as follows. Acts as an agonist of neurotensin receptors. It binds to human neurotensin type 1 receptor (NTSR1), rat neurotensin types 1 and 2 receptors (NTSR1/NTSR2) and mouse neurotensin type 3 receptor (SORT1). The protein is Contulakin-Lt2 of Conus litteratus (Lettered cone).